The chain runs to 742 residues: Hapless 2 (742 aa).

Positions 1-19 (MKFLAFGLIYFHFCILNRC) are cleaved as a signal peptide. The Extracellular portion of the chain corresponds to 20–540 (EYITSSTIQK…CYFSAGCIKE (521 aa)). Intrachain disulfides connect C30-C40, C118-C147, C129-C182, C148-C312, C150-C168, C295-C319, and C431-C470. The interval 152–179 (LSDILGMGNDLSRGKVCYALNLGAGSAT) is important for membrane fusion. The chain crosses the membrane as a helical span at residues 541 to 561 (AFKSIASIAGVASALALVIFL). Topologically, residues 562 to 742 (AKNGYLVPII…STSPLYLLIE (181 aa)) are cytoplasmic.

It belongs to the HAP2/GCS1 family.

It localises to the cell membrane. The protein resides in the cell junction. Functionally, during fertilization, required for the formation of intercellular membrane pores and subsequent exchange of gametic pronuclei between cells. Probably initiates the formation of intercellular membrane pores by inserting part of its extracellular domain into the cell membrane of the adjoining cell in the mating pair. Mating requires the presence of HAP2 on at least one of the two cells. Mating efficiency is high when HAP2 is present on both cells, and is strongly reduced when HAP2 is present on only one of the two cells. This Tetrahymena thermophila protein is Hapless 2.